The chain runs to 516 residues: uncharacterized protein (516 aa).

Residues 31 to 185 (ACIFLSKFDM…LDKFDIFEKF (155 aa)) enclose the uDENN domain. The cDENN domain maps to 211 to 365 (HLVEYLPYWT…LEVYEKLILG (155 aa)). Residues 367–513 (LQEDASTNAT…DISNLPECLG (147 aa)) enclose the dDENN domain. Residues C511 and C516 are each lipidated (S-palmitoyl cysteine).

Post-translationally, palmitoylated by AKR1.

It localises to the lipid droplet. May be involved in lipid metabolism. This is an uncharacterized protein from Saccharomyces cerevisiae (strain ATCC 204508 / S288c) (Baker's yeast).